Here is a 180-residue protein sequence, read N- to C-terminus: MFSKAFSFQKVFAPARRRLLVLLLAALMAGFGWGLAPVFAARDIPAVALSPTESITFTEAQLAKGKKLFNTACAQCHVGGQTYPNPDVSLKLSDLEGATPPRDNVLAIVDYIKNPVTYDGVESLLEYHPNTQLTSEYPRLRNLTDEDLKLIAGYILVQAKTVPGWGGTKNESHSDLSAYL.

The N-terminal stretch at 1-40 (MFSKAFSFQKVFAPARRRLLVLLLAALMAGFGWGLAPVFA) is a signal peptide. 4 residues coordinate heme c: cysteine 73, cysteine 76, histidine 77, and histidine 128.

It belongs to the cytochrome c family. PsbV subfamily. PSII is composed of 1 copy each of membrane proteins PsbA, PsbB, PsbC, PsbD, PsbE, PsbF, PsbH, PsbI, PsbJ, PsbK, PsbL, PsbM, PsbT, PsbX, PsbY, PsbZ, Psb30/Ycf12, peripheral proteins PsbO, CyanoQ (PsbQ), PsbU, PsbV and a large number of cofactors. It forms dimeric complexes. Heme c is required as a cofactor.

The protein localises to the cellular thylakoid membrane. Functionally, one of the extrinsic, lumenal subunits of photosystem II (PSII). PSII is a light-driven water plastoquinone oxidoreductase, using light energy to abstract electrons from H(2)O, generating a proton gradient subsequently used for ATP formation. The extrinsic proteins stabilize the structure of photosystem II oxygen-evolving complex (OEC), the ion environment of oxygen evolution and protect the OEC against heat-induced inactivation. Low-potential cytochrome c that plays a role in the OEC of PSII. In Synechococcus sp. (strain JA-2-3B'a(2-13)) (Cyanobacteria bacterium Yellowstone B-Prime), this protein is Photosystem II extrinsic protein V.